The following is a 590-amino-acid chain: Aspartate--tRNA(Asp/Asn) ligase (590 aa).

E175 contributes to the L-aspartate binding site. The segment at 199–202 (QQYK) is aspartate. Residues R221 and H450 each coordinate L-aspartate. Residue 221–223 (RDE) coordinates ATP. E484 contributes to the ATP binding site. R491 serves as a coordination point for L-aspartate. Residue 536–539 (GVDR) participates in ATP binding.

This sequence belongs to the class-II aminoacyl-tRNA synthetase family. Type 1 subfamily. In terms of assembly, homodimer.

Its subcellular location is the cytoplasm. It catalyses the reaction tRNA(Asx) + L-aspartate + ATP = L-aspartyl-tRNA(Asx) + AMP + diphosphate. Its function is as follows. Aspartyl-tRNA synthetase with relaxed tRNA specificity since it is able to aspartylate not only its cognate tRNA(Asp) but also tRNA(Asn). Reaction proceeds in two steps: L-aspartate is first activated by ATP to form Asp-AMP and then transferred to the acceptor end of tRNA(Asp/Asn). The sequence is that of Aspartate--tRNA(Asp/Asn) ligase from Bradyrhizobium sp. (strain ORS 278).